The chain runs to 452 residues: MVSAPGDHAGVSREGLRILPVTGLPEFRPGDDVAERIAAAAPWLADGDILVVTSKIIAKAEGRVVPAPVDPEERDAVRRALVEQEAVRVLARKGRTLITENKLGIVQAASGVDGSNVEKDELVLLPADPDASAAALRAGLAERLGVRVAVVVTDTMGRAWRNGQTDAAIGAAGLRVLHDYAGAVDGQGNELHVTQVAVADELAAAADLVKGKLRGVPVAVVRGLPTQEDGSTAADLVRAGEEDLFWLGTAEAVERGRREAVLLRRSVRTFADTPVEPDTIRAAVSVALTAPAPHHTRPVRFVWVRDAQRRQRLLAAMADKWRADLRADGLDPERIERRVGRGRILFDAPEVLIPCCVPDGAHSYPDERRQAAETTMFTVAVGAAVQGLLVALATEGVGSCWIGSTIFAPEVTRAELDLPADWNPLGAIAVGYPTEELAPRPPRDPGDGLVER.

The coenzyme F420:L-glutamate ligase stretch occupies residues 1–248; that stretch reads MVSAPGDHAG…AGEEDLFWLG (248 aa). GTP is bound by residues 24 to 27, serine 54, and lysine 59; that span reads LPEF. Residue aspartate 113 coordinates a divalent metal cation. Residue asparagine 116 coordinates GTP. A divalent metal cation-binding residues include aspartate 154 and threonine 155. The segment at 249 to 452 is dehydro-coenzyme F420-0 reductase; the sequence is TAEAVERGRR…RDPGDGLVER (204 aa). FMN is bound by residues 264–268 and alanine 292; that span reads RRSVR. A coenzyme F420-(gamma-Glu)n-binding site is contributed by aspartate 324. Glycine 403 and arginine 440 together coordinate FMN.

This sequence in the N-terminal section; belongs to the CofE family. Mg(2+) serves as cofactor. It depends on Mn(2+) as a cofactor. Requires K(+) as cofactor.

The catalysed reaction is oxidized coenzyme F420-0 + GTP + L-glutamate = oxidized coenzyme F420-1 + GDP + phosphate + H(+). The enzyme catalyses oxidized coenzyme F420-0 + FMN + H(+) = dehydro coenzyme F420-0 + FMNH2. It carries out the reaction oxidized coenzyme F420-1 + GTP + L-glutamate = oxidized coenzyme F420-2 + GDP + phosphate + H(+). Its pathway is cofactor biosynthesis; coenzyme F420 biosynthesis. Functionally, bifunctional enzyme that catalyzes the GTP-dependent successive addition of two or more gamma-linked L-glutamates to the L-lactyl phosphodiester of 7,8-didemethyl-8-hydroxy-5-deazariboflavin (F420-0) to form polyglutamated F420 derivatives, and the FMNH2-dependent reduction of dehydro-F420-0 to form F420-0. This chain is Bifunctional F420 biosynthesis protein FbiB, found in Nocardia farcinica (strain IFM 10152).